The primary structure comprises 137 residues: Small heat shock protein IbpA (137 aa).

In terms of domain architecture, sHSP spans 28–137; that stretch reads SQSNGGYPPY…ANKPRRIEIN (110 aa).

Belongs to the small heat shock protein (HSP20) family. As to quaternary structure, monomer. Forms homomultimers of about 100-150 subunits at optimal growth temperatures. Conformation changes to monomers at high temperatures or high ionic concentrations.

Its subcellular location is the cytoplasm. In terms of biological role, associates with aggregated proteins, together with IbpB, to stabilize and protect them from irreversible denaturation and extensive proteolysis during heat shock and oxidative stress. Aggregated proteins bound to the IbpAB complex are more efficiently refolded and reactivated by the ATP-dependent chaperone systems ClpB and DnaK/DnaJ/GrpE. Its activity is ATP-independent. The polypeptide is Small heat shock protein IbpA (Klebsiella pneumoniae (strain 342)).